The primary structure comprises 287 residues: MYRDSPLMSTPVANDSRSDEGPSGKLSPTCLFPSFTCDFLDGDSSFECCSIDPLTGSHYICRRSPRLLTNGYYIWTEDSFFCDPDGHITLNPSQTSVMYKENLVRIFRKKKRTHRSLSSLLDPRASKSWLHGSIFGEVDSLPSEDLWLDGIRSLGSDLDCSLSDGWESQKPVTDTSESSSSGYILPQSLRESSQSSSLQLQVKASGHFEKNSLVHSRAGLMHKVSFQAILLAVCLVISAYTRWFVGGELASIFTCALLITIAYVVKSLFLNLARYFKATSCARFDST.

Residues 1-25 (MYRDSPLMSTPVANDSRSDEGPSGK) form a disordered region. A run of 2 helical transmembrane segments spans residues 218 to 238 (AGLMHKVSFQAILLAVCLVIS) and 244 to 264 (FVGGELASIFTCALLITIAYV).

It belongs to the TMEM71 family.

It is found in the membrane. This chain is Transmembrane protein 71 (Tmem71), found in Mus musculus (Mouse).